We begin with the raw amino-acid sequence, 338 residues long: Lipoate-protein ligase A (338 aa).

Residues 29–216 form the BPL/LPL catalytic domain; it reads SPNQRVLFLW…AFFAYYDEQV (188 aa). Residues R71, 76-79, and K134 each bind ATP; that span reads GAVF. K134 contacts (R)-lipoate.

It belongs to the LplA family. In terms of assembly, monomer.

The protein localises to the cytoplasm. The catalysed reaction is L-lysyl-[lipoyl-carrier protein] + (R)-lipoate + ATP = N(6)-[(R)-lipoyl]-L-lysyl-[lipoyl-carrier protein] + AMP + diphosphate + H(+). It participates in protein modification; protein lipoylation via exogenous pathway; protein N(6)-(lipoyl)lysine from lipoate: step 1/2. Its pathway is protein modification; protein lipoylation via exogenous pathway; protein N(6)-(lipoyl)lysine from lipoate: step 2/2. In terms of biological role, catalyzes both the ATP-dependent activation of exogenously supplied lipoate to lipoyl-AMP and the transfer of the activated lipoyl onto the lipoyl domains of lipoate-dependent enzymes. This chain is Lipoate-protein ligase A, found in Yersinia pseudotuberculosis serotype O:1b (strain IP 31758).